Here is a 298-residue protein sequence, read N- to C-terminus: Formylmethanofuran--tetrahydromethanopterin formyltransferase (298 aa).

This sequence belongs to the FTR family. As to quaternary structure, homotetramer.

It is found in the cytoplasm. The catalysed reaction is N-formylmethanofuran + 5,6,7,8-tetrahydromethanopterin + H(+) = N(5)-formyl-5,6,7,8-tetrahydromethanopterin + methanofuran. It participates in one-carbon metabolism; formaldehyde degradation; formate from formaldehyde (H(4)MPT route): step 4/5. Catalyzes the transfer of a formyl group from 5-formyl tetrahydromethanopterin (5-formyl-H(4)MPT) to methanofuran (MFR) to produce formylmethanofuran (formyl-MFR) and tetrahydromethanopterin (H(4)MPT). The protein is Formylmethanofuran--tetrahydromethanopterin formyltransferase of Methylococcus capsulatus (strain ATCC 33009 / NCIMB 11132 / Bath).